Reading from the N-terminus, the 545-residue chain is Glucose-6-phosphate isomerase (545 aa).

Glu-351 (proton donor) is an active-site residue. Residues His-382 and Lys-510 contribute to the active site.

This sequence belongs to the GPI family.

The protein resides in the cytoplasm. It catalyses the reaction alpha-D-glucose 6-phosphate = beta-D-fructose 6-phosphate. It participates in carbohydrate biosynthesis; gluconeogenesis. It functions in the pathway carbohydrate degradation; glycolysis; D-glyceraldehyde 3-phosphate and glycerone phosphate from D-glucose: step 2/4. In terms of biological role, catalyzes the reversible isomerization of glucose-6-phosphate to fructose-6-phosphate. The polypeptide is Glucose-6-phosphate isomerase (Shewanella halifaxensis (strain HAW-EB4)).